The following is a 662-amino-acid chain: Rap guanine nucleotide exchange factor-like 1 (662 aa).

A disordered region spans residues 1–149 (MKPLEKFLKK…PPWAPLGAPE (149 aa)). The segment covering 20-48 (VTGGPGGGPGCCGGPGGGGGPGGGGGPAG) has biased composition (gly residues). Composition is skewed to low complexity over residues 49–65 (GLRP…LLLP) and 116–133 (SGVP…ELSP). Residues 424 to 660 (EPEDVANHLT…FELSYKLEAN (237 aa)) form the Ras-GEF domain.

Probable guanine nucleotide exchange factor (GEF). The protein is Rap guanine nucleotide exchange factor-like 1 (Rapgefl1) of Mus musculus (Mouse).